A 336-amino-acid polypeptide reads, in one-letter code: Large ribosomal subunit protein mL39 (336 aa).

Residues glutamate 60–threonine 126 form the TGS domain. Residue lysine 123 is modified to N6-acetyllysine.

The protein belongs to the mitochondrion-specific ribosomal protein mL39 family. As to quaternary structure, component of the mitochondrial ribosome large subunit (39S) which comprises a 16S rRNA and about 50 distinct proteins.

It localises to the mitochondrion. The protein is Large ribosomal subunit protein mL39 (Mrpl39) of Mus musculus (Mouse).